An 88-amino-acid polypeptide reads, in one-letter code: Small ribosomal subunit protein bS16c (88 aa).

The protein belongs to the bacterial ribosomal protein bS16 family.

It is found in the plastid. It localises to the chloroplast. The sequence is that of Small ribosomal subunit protein bS16c from Jasminum nudiflorum (Winter jasmine).